We begin with the raw amino-acid sequence, 413 residues long: Protein PHR1-LIKE 1 (413 aa).

Disordered stretches follow at residues 171 to 196 (SEPN…TPFL) and 208 to 233 (QQQM…SKQR). 2 stretches are compositionally biased toward polar residues: residues 181-191 (DSSSHNPNSEI) and 208-231 (QQQM…ATSK). Residues 228-288 (ATSKQRMRWT…HLQKYRTARY (61 aa)) form the HTH myb-type domain. A DNA-binding region (H-T-H motif) is located at residues 259–284 (PKAVLKLLNNPGLTIYHVKSHLQKYR). The tract at residues 322 to 342 (TQALRLQMEVQKRLHEQLEIQ) is coiled coil. Residues 335–340 (LHEQLE) carry the LHEQLE motif. The tract at residues 363–413 (QQKIQDNKSSSSEASPKQCNGSFAEVEVGLETLTGDQNESASASRKRVRED) is disordered. Polar residues-rich tracts occupy residues 369–383 (NKSS…QCNG) and 396–405 (TGDQNESASA).

It belongs to the MYB-CC family. Homodimers and heterodimers. Interacts with MED25. Does not interact with PHL2 or PHL3. In terms of tissue distribution, expressed in shoots and roots.

Its subcellular location is the nucleus. Its function is as follows. Transcription factor acting as central integrator of phosphate starvation responses. Regulates FER1 expression upon phosphate starvation, linking iron and phosphate homeostasis. This chain is Protein PHR1-LIKE 1 (PHL1), found in Arabidopsis thaliana (Mouse-ear cress).